We begin with the raw amino-acid sequence, 775 residues long: ATP-dependent 6-phosphofructokinase 2 (775 aa).

Residues 1 to 390 form an N-terminal catalytic PFK domain 1 region; sequence MTNTILDTYS…YHSAYRHLNT (390 aa). ATP is bound by residues G25, 88–89, and 118–121; these read RC and GDGS. Residue D119 coordinates Mg(2+). Substrate is bound by residues 164-166, R201, 208-210, E264, R292, and 298-301; these read SID, MGR, and HIQR. The active-site Proton acceptor is the D166. The segment at 391–404 is interdomain linker; the sequence is SDHPKMVLPEDKRM. The tract at residues 405–775 is C-terminal regulatory PFK domain 2; the sequence is RVAIIHVGAP…GRSSLYAIPN (371 aa). Beta-D-fructose 2,6-bisphosphate contacts are provided by residues 537 to 541, 582 to 584, D640, and 672 to 675; these read SMSNN, QGA, and HFQQ.

It belongs to the phosphofructokinase type A (PFKA) family. ATP-dependent PFK group I subfamily. Eukaryotic two domain clade 'E' sub-subfamily. Homotetramer. It depends on Mg(2+) as a cofactor.

The protein resides in the cytoplasm. The catalysed reaction is beta-D-fructose 6-phosphate + ATP = beta-D-fructose 1,6-bisphosphate + ADP + H(+). The protein operates within carbohydrate degradation; glycolysis; D-glyceraldehyde 3-phosphate and glycerone phosphate from D-glucose: step 3/4. Its activity is regulated as follows. Allosterically activated by ADP, AMP, or fructose 2,6-bisphosphate, and allosterically inhibited by ATP or citrate. In terms of biological role, catalyzes the phosphorylation of D-fructose 6-phosphate to fructose 1,6-bisphosphate by ATP, the first committing step of glycolysis. This Aspergillus oryzae (strain ATCC 42149 / RIB 40) (Yellow koji mold) protein is ATP-dependent 6-phosphofructokinase 2 (pfkB).